The following is a 213-amino-acid chain: Agglutinin isolectin 2 (213 aa).

The signal sequence occupies residues 1–27 (MRKMMSTMALTLGAAVFLAFAAATAQA). Position 28 is a pyrrolidone carboxylic acid (Gln-28). Chitin-binding type-1 domains follow at residues 28-69 (QRCG…ACWT), 70-112 (SKRC…PCRA), 113-155 (DIKC…ACST), and 156-198 (DKPC…GCDA). 16 disulfides stabilise this stretch: Cys-30–Cys-45, Cys-39–Cys-51, Cys-44–Cys-58, Cys-62–Cys-67, Cys-73–Cys-88, Cys-82–Cys-94, Cys-87–Cys-101, Cys-105–Cys-110, Cys-116–Cys-131, Cys-125–Cys-137, Cys-130–Cys-144, Cys-148–Cys-153, Cys-159–Cys-174, Cys-168–Cys-180, Cys-173–Cys-187, and Cys-191–Cys-196. 37-39 (MEC) lines the substrate pocket. Residue 89–100 (SQYGHCGFGAEY) coordinates substrate. 141–142 (SE) lines the substrate pocket. A propeptide spanning residues 199–213 (VFAGAITANSTLLAE) is cleaved from the precursor.

Homodimer, u-shaped.

N-acetyl-D-glucosamine / N-acetyl-D-neuraminic acid binding lectin. In Triticum aestivum (Wheat), this protein is Agglutinin isolectin 2.